The chain runs to 253 residues: DNA repair protein RecO (253 aa).

The protein belongs to the RecO family.

In terms of biological role, involved in DNA repair and RecF pathway recombination. The sequence is that of DNA repair protein RecO from Pediococcus pentosaceus (strain ATCC 25745 / CCUG 21536 / LMG 10740 / 183-1w).